The sequence spans 759 residues: Protein YdeP (759 aa).

[4Fe-4S] cluster is bound by residues Cys49 and Cys52.

This sequence belongs to the prokaryotic molybdopterin-containing oxidoreductase family. [4Fe-4S] cluster is required as a cofactor. The cofactor is Mo-bis(molybdopterin guanine dinucleotide).

Probably involved in acid resistance. In Shigella flexneri, this protein is Protein YdeP (ydeP).